We begin with the raw amino-acid sequence, 182 residues long: Adenine phosphoribosyltransferase (182 aa).

Belongs to the purine/pyrimidine phosphoribosyltransferase family. Homodimer.

The protein localises to the cytoplasm. The catalysed reaction is AMP + diphosphate = 5-phospho-alpha-D-ribose 1-diphosphate + adenine. It participates in purine metabolism; AMP biosynthesis via salvage pathway; AMP from adenine: step 1/1. Its function is as follows. Catalyzes a salvage reaction resulting in the formation of AMP, that is energically less costly than de novo synthesis. The protein is Adenine phosphoribosyltransferase of Ectopseudomonas mendocina (strain ymp) (Pseudomonas mendocina).